The following is a 415-amino-acid chain: Multidrug resistance protein MdtA (415 aa).

Residues 1 to 21 (MKGSYKSRWVIVIVVVIAAIA) form the signal peptide. A compositionally biased stretch (polar residues) spans 31-47 (DSQSAAPGATKQAQQSP). Disordered stretches follow at residues 31 to 56 (DSQS…GMRA) and 390 to 415 (VVET…GARS). Over residues 399 to 415 (PEEKATSREYAKKGARS) the composition is skewed to basic and acidic residues.

This sequence belongs to the membrane fusion protein (MFP) (TC 8.A.1) family. Part of a tripartite efflux system composed of MdtA, MdtB and MdtC.

The protein localises to the cell inner membrane. Its function is as follows. The MdtABC tripartite complex confers resistance against novobiocin and deoxycholate. The polypeptide is Multidrug resistance protein MdtA (Escherichia coli O6:H1 (strain CFT073 / ATCC 700928 / UPEC)).